The chain runs to 147 residues: Large ribosomal subunit protein uL13 (147 aa).

The tract at residues 126 to 147 (AGPTHPHQAQQPVPYEIKQVAQ) is disordered.

This sequence belongs to the universal ribosomal protein uL13 family. In terms of assembly, part of the 50S ribosomal subunit.

Its function is as follows. This protein is one of the early assembly proteins of the 50S ribosomal subunit, although it is not seen to bind rRNA by itself. It is important during the early stages of 50S assembly. The polypeptide is Large ribosomal subunit protein uL13 (Parafrankia sp. (strain EAN1pec)).